Here is a 325-residue protein sequence, read N- to C-terminus: Transaldolase (325 aa).

The Schiff-base intermediate with substrate role is filled by Lys-125.

This sequence belongs to the transaldolase family. Type 2 subfamily.

It localises to the cytoplasm. It carries out the reaction D-sedoheptulose 7-phosphate + D-glyceraldehyde 3-phosphate = D-erythrose 4-phosphate + beta-D-fructose 6-phosphate. It participates in carbohydrate degradation; pentose phosphate pathway; D-glyceraldehyde 3-phosphate and beta-D-fructose 6-phosphate from D-ribose 5-phosphate and D-xylulose 5-phosphate (non-oxidative stage): step 2/3. In terms of biological role, transaldolase is important for the balance of metabolites in the pentose-phosphate pathway. The sequence is that of Transaldolase from Campylobacter jejuni subsp. jejuni serotype O:23/36 (strain 81-176).